We begin with the raw amino-acid sequence, 593 residues long: Arginine--tRNA ligase (593 aa).

Residues 138 to 148 carry the 'HIGH' region motif; it reads ANPTGPLHVGH.

The protein belongs to the class-I aminoacyl-tRNA synthetase family. As to quaternary structure, monomer.

It is found in the cytoplasm. It catalyses the reaction tRNA(Arg) + L-arginine + ATP = L-arginyl-tRNA(Arg) + AMP + diphosphate. This chain is Arginine--tRNA ligase, found in Burkholderia orbicola (strain MC0-3).